A 363-amino-acid chain; its full sequence is Fructose-bisphosphate aldolase (363 aa).

Residues Arg56 and Lys147 each coordinate substrate. Glu188 (proton acceptor) is an active-site residue. Catalysis depends on Lys230, which acts as the Schiff-base intermediate with dihydroxyacetone-P.

Belongs to the class I fructose-bisphosphate aldolase family.

It catalyses the reaction beta-D-fructose 1,6-bisphosphate = D-glyceraldehyde 3-phosphate + dihydroxyacetone phosphate. Its pathway is carbohydrate degradation; glycolysis; D-glyceraldehyde 3-phosphate and glycerone phosphate from D-glucose: step 4/4. The polypeptide is Fructose-bisphosphate aldolase (Schistosoma mansoni (Blood fluke)).